Reading from the N-terminus, the 632-residue chain is Probable extracellular metalloproteinase 2 (632 aa).

Positions 1-19 (MHGLLLAGLAAALPLGVAG) are cleaved as a signal peptide. A propeptide spanning residues 20–244 (LPARQQSGLS…VHNVVDYVAS (225 aa)) is cleaved from the precursor. N-linked (GlcNAc...) asparagine glycosylation is found at N81 and N270. H429 provides a ligand contact to Zn(2+). E430 is a catalytic residue. H433 serves as a coordination point for Zn(2+).

The protein belongs to the peptidase M36 family. It depends on Zn(2+) as a cofactor.

The protein localises to the secreted. Secreted metalloproteinase probably acting as a virulence factor. The sequence is that of Probable extracellular metalloproteinase 2 (MEP2) from Arthroderma benhamiae (strain ATCC MYA-4681 / CBS 112371) (Trichophyton mentagrophytes).